A 270-amino-acid polypeptide reads, in one-letter code: Putative serine acetyltransferase (270 aa).

This sequence belongs to the transferase hexapeptide repeat family.

The protein resides in the cytoplasm. The protein localises to the nucleus. The enzyme catalyses L-serine + acetyl-CoA = O-acetyl-L-serine + CoA. Its pathway is amino-acid biosynthesis; L-cysteine biosynthesis; L-cysteine from L-serine: step 1/2. The chain is Putative serine acetyltransferase from Schizosaccharomyces pombe (strain 972 / ATCC 24843) (Fission yeast).